The primary structure comprises 115 residues: T cell receptor beta variable 7-4 (115 aa).

Positions 1–21 (MGTRLLCWVVLGFLGTDHTGA) are cleaved as a signal peptide. An Ig-like domain is found at 22-115 (GVSQSPRYKV…SAVYLCASSL (94 aa)). An intrachain disulfide couples Cys42 to Cys111. The interval 67-97 (YSQSDAQRDKSGRPSGRFSAERPERSVSTLK) is disordered.

As to quaternary structure, alpha-beta TR is a heterodimer composed of an alpha and beta chain; disulfide-linked. The alpha-beta TR is associated with the transmembrane signaling CD3 coreceptor proteins to form the TR-CD3 (TcR or TCR). The assembly of alpha-beta TR heterodimers with CD3 occurs in the endoplasmic reticulum where a single alpha-beta TR heterodimer associates with one CD3D-CD3E heterodimer, one CD3G-CD3E heterodimer and one CD247 homodimer forming a stable octameric structure. CD3D-CD3E and CD3G-CD3E heterodimers preferentially associate with TR alpha and TR beta chains, respectively. The association of the CD247 homodimer is the last step of TcR assembly in the endoplasmic reticulum and is required for transport to the cell surface.

It is found in the cell membrane. In terms of biological role, v region of the variable domain of T cell receptor (TR) beta chain that participates in the antigen recognition. Alpha-beta T cell receptors are antigen specific receptors which are essential to the immune response and are present on the cell surface of T lymphocytes. Recognize peptide-major histocompatibility (MH) (pMH) complexes that are displayed by antigen presenting cells (APC), a prerequisite for efficient T cell adaptive immunity against pathogens. Binding of alpha-beta TR to pMH complex initiates TR-CD3 clustering on the cell surface and intracellular activation of LCK that phosphorylates the ITAM motifs of CD3G, CD3D, CD3E and CD247 enabling the recruitment of ZAP70. In turn ZAP70 phosphorylates LAT, which recruits numerous signaling molecules to form the LAT signalosome. The LAT signalosome propagates signal branching to three major signaling pathways, the calcium, the mitogen-activated protein kinase (MAPK) kinase and the nuclear factor NF-kappa-B (NF-kB) pathways, leading to the mobilization of transcription factors that are critical for gene expression and essential for T cell growth and differentiation. The T cell repertoire is generated in the thymus, by V-(D)-J rearrangement. This repertoire is then shaped by intrathymic selection events to generate a peripheral T cell pool of self-MH restricted, non-autoaggressive T cells. Post-thymic interaction of alpha-beta TR with the pMH complexes shapes TR structural and functional avidity. The polypeptide is T cell receptor beta variable 7-4 (Homo sapiens (Human)).